The chain runs to 1060 residues: Beta-galactosidase (1060 aa).

Asn-110 and Asp-209 together coordinate substrate. Asp-209 provides a ligand contact to Na(+). Residues Glu-432, His-434, and Glu-477 each contribute to the Mg(2+) site. Residues Glu-477 and 553–556 (EYAH) contribute to the substrate site. The active-site Proton donor is the Glu-477. The active-site Nucleophile is Glu-553. Position 613 (Asn-613) interacts with Mg(2+). Positions 617 and 620 each coordinate Na(+). Substrate contacts are provided by Asn-620 and Trp-1035.

The protein belongs to the glycosyl hydrolase 2 family. In terms of assembly, homotetramer. Requires Mg(2+) as cofactor. It depends on Na(+) as a cofactor.

It carries out the reaction Hydrolysis of terminal non-reducing beta-D-galactose residues in beta-D-galactosides.. This chain is Beta-galactosidase, found in Yersinia pestis bv. Antiqua (strain Antiqua).